A 131-amino-acid chain; its full sequence is Small ribosomal subunit protein uS11 (131 aa).

It belongs to the universal ribosomal protein uS11 family. In terms of assembly, part of the 30S ribosomal subunit. Interacts with proteins S7 and S18. Binds to IF-3.

Functionally, located on the platform of the 30S subunit, it bridges several disparate RNA helices of the 16S rRNA. Forms part of the Shine-Dalgarno cleft in the 70S ribosome. In Exiguobacterium sibiricum (strain DSM 17290 / CCUG 55495 / CIP 109462 / JCM 13490 / 255-15), this protein is Small ribosomal subunit protein uS11.